The sequence spans 510 residues: NAD(P)H-quinone oxidoreductase subunit 2 B, chloroplastic (510 aa).

13 consecutive transmembrane segments (helical) span residues 24–44 (LLLF…GLIL), 57–77 (IPWL…ALLF), 99–119 (IFQF…VEYI), 124–144 (MAIT…MFLC), 149–169 (LITI…LSGY), 183–203 (YLLM…WLYG), 227–247 (PGIS…LSPA), 295–315 (WHLL…LIAI), 323–343 (MLAY…IVGD), 354–374 (YMLF…SFGL), 392–412 (AFLA…PPLA), 418–438 (LHLF…IGLL), and 482–502 (LSMI…NPII).

Belongs to the complex I subunit 2 family. As to quaternary structure, NDH is composed of at least 16 different subunits, 5 of which are encoded in the nucleus.

It localises to the plastid. Its subcellular location is the chloroplast thylakoid membrane. The catalysed reaction is a plastoquinone + NADH + (n+1) H(+)(in) = a plastoquinol + NAD(+) + n H(+)(out). The enzyme catalyses a plastoquinone + NADPH + (n+1) H(+)(in) = a plastoquinol + NADP(+) + n H(+)(out). Its function is as follows. NDH shuttles electrons from NAD(P)H:plastoquinone, via FMN and iron-sulfur (Fe-S) centers, to quinones in the photosynthetic chain and possibly in a chloroplast respiratory chain. The immediate electron acceptor for the enzyme in this species is believed to be plastoquinone. Couples the redox reaction to proton translocation, and thus conserves the redox energy in a proton gradient. This Morus indica (Mulberry) protein is NAD(P)H-quinone oxidoreductase subunit 2 B, chloroplastic.